The sequence spans 339 residues: UDP-glucose 4-epimerase (339 aa).

NAD(+) contacts are provided by residues 10 to 12 (GYI), 31 to 35 (DNLSN), 58 to 59 (DL), Phe80, and Lys84. 124 to 126 (SAT) serves as a coordination point for substrate. Tyr148 (proton acceptor) is an active-site residue. Residues Lys152 and Tyr176 each contribute to the NAD(+) site. Residues 176-178 (YFN), 197-199 (NNL), Arg230, and 291-294 (RPGD) contribute to the substrate site.

Belongs to the NAD(P)-dependent epimerase/dehydratase family. NAD(+) serves as cofactor.

The enzyme catalyses UDP-alpha-D-glucose = UDP-alpha-D-galactose. The catalysed reaction is UDP-N-acetyl-alpha-D-glucosamine = UDP-N-acetyl-alpha-D-galactosamine. The protein operates within cell wall biogenesis; teichoic acid biosynthesis. In terms of biological role, catalyzes two distinct but analogous reactions: the reversible epimerization of UDP-glucose to UDP-galactose and the reversible epimerization of UDP-N-acetylglucosamine to UDP-N-acetylgalactosamine. The enzyme is more efficient in catalyzing the interconversion between unacetylated than between corresponding N-acetylated substrates. Essential for growth in media containing either glucose or galactose. May protect the cell from the toxic effects of galactose and glucose or derivatives of both sugars. Involved in the biosynthesis of teichoic acids via the formation of UDP-N-acetylgalactosamine. Influences cell division. This chain is UDP-glucose 4-epimerase, found in Bacillus subtilis (strain 168).